A 113-amino-acid polypeptide reads, in one-letter code: Meiotically up-regulated gene 98 protein, mitochondrial (113 aa).

It is found in the mitochondrion. Has a role in meiosis. This Schizosaccharomyces pombe (strain 972 / ATCC 24843) (Fission yeast) protein is Meiotically up-regulated gene 98 protein, mitochondrial (mug98).